A 620-amino-acid chain; its full sequence is Chaperone protein HscA homolog (620 aa).

It belongs to the heat shock protein 70 family.

Its function is as follows. Chaperone involved in the maturation of iron-sulfur cluster-containing proteins. Has a low intrinsic ATPase activity which is markedly stimulated by HscB. The polypeptide is Chaperone protein HscA homolog (Shewanella sp. (strain ANA-3)).